The following is a 227-amino-acid chain: Thiocyanate methyltransferase 1 (227 aa).

Residues Trp36, Trp40, Trp47, and Gly74 each coordinate S-adenosyl-L-methionine. Residue Ser86 is modified to Phosphoserine. Residues Asp95, 123-124 (DV), and Tyr139 each bind S-adenosyl-L-methionine.

It belongs to the class I-like SAM-binding methyltransferase superfamily. TPMT family. Expressed in shoots, leaves, stems, inflorescences, flowers and green siliques.

The enzyme catalyses thiocyanate + S-adenosyl-L-methionine = methyl thiocyanate + S-adenosyl-L-homocysteine. In terms of biological role, S-adenosyl-L-methionine-dependent methyltransferase. Involved in glucosinolate metabolism and defense against phytopathogens. Highly reactive to thiocyanate (NCS(-)) derived from myrosinase-mediated hydrolysis of glucosinolates upon tissue damage. This chain is Thiocyanate methyltransferase 1, found in Arabidopsis thaliana (Mouse-ear cress).